Reading from the N-terminus, the 455-residue chain is Ribosomal protein uS12 methylthiotransferase RimO (455 aa).

In terms of domain architecture, MTTase N-terminal spans 21-131; sequence GKVGFISLGC…VVGAVHQYVP (111 aa). Residues C30, C66, C95, C164, C168, and C171 each coordinate [4Fe-4S] cluster. The Radical SAM core domain maps to 150–387; that stretch reads LTPRHYAYLK…MAKQAEISAA (238 aa). In terms of domain architecture, TRAM spans 390 to 455; sequence QAKIGRTIDV…DEHDLWARLI (66 aa).

The protein belongs to the methylthiotransferase family. RimO subfamily. It depends on [4Fe-4S] cluster as a cofactor.

Its subcellular location is the cytoplasm. It carries out the reaction L-aspartate(89)-[ribosomal protein uS12]-hydrogen + (sulfur carrier)-SH + AH2 + 2 S-adenosyl-L-methionine = 3-methylsulfanyl-L-aspartate(89)-[ribosomal protein uS12]-hydrogen + (sulfur carrier)-H + 5'-deoxyadenosine + L-methionine + A + S-adenosyl-L-homocysteine + 2 H(+). Functionally, catalyzes the methylthiolation of an aspartic acid residue of ribosomal protein uS12. The chain is Ribosomal protein uS12 methylthiotransferase RimO from Marinobacter nauticus (strain ATCC 700491 / DSM 11845 / VT8) (Marinobacter aquaeolei).